Here is a 662-residue protein sequence, read N- to C-terminus: Envelope glycoprotein (662 aa).

An N-terminal signal peptide occupies residues 1–34 (MEGPTHPKPSKDKTFSWDLMILVGVLLRLDVGMA). Topologically, residues 35–606 (NPSPHQIYNV…FNKSPWFTTL (572 aa)) are extracellular. N-linked (GlcNAc...) asparagine; by host glycosylation is found at N43 and N58. Disulfide bonds link C115–C132 and C124–C137. Residues 251 to 281 (VLPDQKPPSRQSQIESRVTPHHSQGNGGTPG) are disordered. Positions 258 to 274 (PSRQSQIESRVTPHHSQ) are enriched in polar residues. 3 N-linked (GlcNAc...) asparagine; by host glycosylation sites follow: N286, N322, and N327. 3 cysteine pairs are disulfide-bonded: C332–C335, C332–C559, and C551–C558. The CXXC motif lies at 332–335 (CWLC). Residues N351, N354, and N430 are each glycosylated (N-linked (GlcNAc...) asparagine; by host). The tract at residues 468 to 488 (ISLTVALMLGGLTVGGIAAGV) is fusion peptide. 2 coiled-coil regions span residues 496-545 (LETA…ILFL) and 555-591 (KEECCFYADHTGLVRDNMAKLRERLKQRQQLFDSQQG). The immunosuppression stretch occupies residues 534–550 (LQNRRGLDILFLQEGGL). The CX6CC motif lies at 551–559 (CAALKEECC). Residues 607–627 (ISSIMGPLLILLLILLFGPCI) form a helical membrane-spanning segment. The S-palmitoyl cysteine; by host moiety is linked to residue C626. Residues 628 to 662 (LNRLVQFVKDRISVVQALILTQQYQQIKQYDPDQP) are Cytoplasmic-facing.

In terms of assembly, the mature envelope protein (Env) consists of a trimer of SU-TM heterodimers attached by a labile interchain disulfide bond. In terms of processing, specific enzymatic cleavages in vivo yield mature proteins. Envelope glycoproteins are synthesized as an inactive precursor that is N-glycosylated and processed likely by host cell furin or by a furin-like protease in the Golgi to yield the mature SU and TM proteins. The cleavage site between SU and TM requires the minimal sequence [KR]-X-[KR]-R. The R-peptide is released from the C-terminus of the cytoplasmic tail of the TM protein upon particle formation as a result of proteolytic cleavage by the viral protease. Cleavage of this peptide is required for TM to become fusogenic. Post-translationally, the CXXC motif is highly conserved across a broad range of retroviral envelope proteins. It is thought to participate in the formation of a labile disulfide bond possibly with the CX6CC motif present in the transmembrane protein. Isomerization of the intersubunit disulfide bond to an SU intrachain disulfide bond is thought to occur upon receptor recognition in order to allow membrane fusion. The transmembrane protein is palmitoylated. In terms of processing, the R-peptide is palmitoylated.

The protein resides in the virion membrane. Its subcellular location is the host cell membrane. Its function is as follows. The surface protein (SU) attaches the virus to the host cell by binding to its receptor. This interaction triggers the refolding of the transmembrane protein (TM) and is thought to activate its fusogenic potential by unmasking its fusion peptide. Fusion occurs at the host cell plasma membrane. In terms of biological role, the transmembrane protein (TM) acts as a class I viral fusion protein. Under the current model, the protein has at least 3 conformational states: pre-fusion native state, pre-hairpin intermediate state, and post-fusion hairpin state. During viral and target cell membrane fusion, the coiled coil regions (heptad repeats) assume a trimer-of-hairpins structure, positioning the fusion peptide in close proximity to the C-terminal region of the ectodomain. The formation of this structure appears to drive apposition and subsequent fusion of viral and target cell membranes. Membranes fusion leads to delivery of the nucleocapsid into the cytoplasm. This chain is Envelope glycoprotein (env), found in Felis catus (Cat).